Reading from the N-terminus, the 368-residue chain is 3-isopropylmalate dehydrogenase (368 aa).

79-91 (GPEWGTSSTVRPE) is a binding site for NAD(+). Substrate-binding residues include R98, R108, R137, and D226. Residues D226, D251, and D255 each coordinate Mg(2+). Residue 291–303 (GSAPDISGKGIVN) coordinates NAD(+).

This sequence belongs to the isocitrate and isopropylmalate dehydrogenases family. Homodimer. The cofactor is Mg(2+). It depends on Mn(2+) as a cofactor.

It is found in the cytoplasm. It carries out the reaction (2R,3S)-3-isopropylmalate + NAD(+) = 4-methyl-2-oxopentanoate + CO2 + NADH. The protein operates within amino-acid biosynthesis; L-leucine biosynthesis; L-leucine from 3-methyl-2-oxobutanoate: step 3/4. Functionally, catalyzes the oxidation of 3-carboxy-2-hydroxy-4-methylpentanoate (3-isopropylmalate) to 3-carboxy-4-methyl-2-oxopentanoate. The product decarboxylates to 4-methyl-2 oxopentanoate. This chain is 3-isopropylmalate dehydrogenase (LEU1), found in Sordaria macrospora.